We begin with the raw amino-acid sequence, 640 residues long: Threonine--tRNA ligase (640 aa).

Positions 1–60 constitute a TGS domain; that stretch reads MKITFPDGAVKEFEPGVSTADIAASISPGLKKKALAGKLNGELLDLVTPIHEDGAIEIVT. The interval 241 to 538 is catalytic; it reads DHRKLGKELD…LIEEYKGAFP (298 aa). Zn(2+) contacts are provided by C334, H385, and H515.

This sequence belongs to the class-II aminoacyl-tRNA synthetase family. Homodimer. It depends on Zn(2+) as a cofactor.

The protein localises to the cytoplasm. It carries out the reaction tRNA(Thr) + L-threonine + ATP = L-threonyl-tRNA(Thr) + AMP + diphosphate + H(+). Its function is as follows. Catalyzes the attachment of threonine to tRNA(Thr) in a two-step reaction: L-threonine is first activated by ATP to form Thr-AMP and then transferred to the acceptor end of tRNA(Thr). Also edits incorrectly charged L-seryl-tRNA(Thr). The polypeptide is Threonine--tRNA ligase (Listeria monocytogenes serotype 4b (strain CLIP80459)).